A 130-amino-acid chain; its full sequence is Protein ApaG (130 aa).

An ApaG domain is found at 3-127 (RAVTRGIEVS…FSLDIPEQRR (125 aa)).

This chain is Protein ApaG, found in Brucella anthropi (strain ATCC 49188 / DSM 6882 / CCUG 24695 / JCM 21032 / LMG 3331 / NBRC 15819 / NCTC 12168 / Alc 37) (Ochrobactrum anthropi).